A 423-amino-acid polypeptide reads, in one-letter code: MAIELNQIWDFPIKEFHPFPRALLGVGAHDIIGVEAKNLGFKRTLLMTTGLRGSGIIEELTGKIEYQGVEVVLYDKVESNPKDYNVMEAAALYQQERCDSIISIGGGSSHDAAKGARVVIAHDGRNINEFEGFAKSTNKQNPPHIAVSTTAGTGSETSWAYVITDTSDMEHPHKWVGFDEATIVTLAIDDPLLYYTCPQHFTAYCGFDVLAHGSEPYVSRLDFAPSLGNALYSVELVAKHLREAVFEPRNLKAREGMMNAQYIAGQAFNSGGLGIVHSISHAVSAFFDSHHGLNNAIALPRVWEYNLPSRYERYAQLATAMGVDTRNMTTVQAADAAVEAAIRLSQDVGIPDNFSQVRVDSYDKNRMNTGKYAGKGEVIKGDDKSVLAISEHIQGDWCTPGNPREVTVDSMIPVVGHAINGTY.

Belongs to the iron-containing alcohol dehydrogenase family. As to quaternary structure, homodecamer. It depends on Mg(2+) as a cofactor. Zn(2+) is required as a cofactor. The cofactor is NADPH.

The enzyme catalyses methanol + A = formaldehyde + AH2. In terms of biological role, catalyzes the oxidation of methanol to yield formaldehyde. While the in vivo electron acceptor is not known, N,N-dimethyl-4-nitrosoaniline (NDMA) can serve this function in vitro and is reduced to 4-(hydroxylamino)-N,N-dimethylaniline. It is also able to use ethanol and formaldehyde with an activity comparable to methanol, and has a weak activity with methylamine as substrate. The chain is Methanol:N,N-dimethyl-4-nitrosoaniline oxidoreductase from Mycobacterium sp. (strain DSM 3803 / JC1).